Consider the following 131-residue polypeptide: Translation initiation factor 5A (131 aa).

Residue K37 is modified to Hypusine.

The protein belongs to the eIF-5A family.

The protein resides in the cytoplasm. Its function is as follows. Functions by promoting the formation of the first peptide bond. The polypeptide is Translation initiation factor 5A (eIF5A) (Methanococcus maripaludis (strain C7 / ATCC BAA-1331)).